The sequence spans 267 residues: Hydroxyethylthiazole kinase (267 aa).

Met46 lines the substrate pocket. Arg122 and Ser168 together coordinate ATP. Gly195 contributes to the substrate binding site.

This sequence belongs to the Thz kinase family. Mg(2+) serves as cofactor.

The catalysed reaction is 5-(2-hydroxyethyl)-4-methylthiazole + ATP = 4-methyl-5-(2-phosphooxyethyl)-thiazole + ADP + H(+). Its pathway is cofactor biosynthesis; thiamine diphosphate biosynthesis; 4-methyl-5-(2-phosphoethyl)-thiazole from 5-(2-hydroxyethyl)-4-methylthiazole: step 1/1. Functionally, catalyzes the phosphorylation of the hydroxyl group of 4-methyl-5-beta-hydroxyethylthiazole (THZ). The protein is Hydroxyethylthiazole kinase of Nitratidesulfovibrio vulgaris (strain DP4) (Desulfovibrio vulgaris).